A 198-amino-acid chain; its full sequence is Guanylyl cyclase-activating protein 2 (198 aa).

Glycine 2 is lipidated: N-myristoyl glycine. EF-hand domains are found at residues 16–51, 52–87, 88–123, and 139–174; these read DVAE…QDNH, EAAE…VLRG, KLEH…IYKL, and TPEE…DKWV. 15 residues coordinate Ca(2+): aspartate 65, asparagine 67, aspartate 69, threonine 71, glutamate 76, aspartate 101, aspartate 103, asparagine 105, cysteine 107, glutamate 112, aspartate 152, asparagine 154, aspartate 156, glutamine 158, and glutamate 163.

In terms of assembly, undergoes dimerization at low calcium ions concentration, while the presence of calcium ions inhibits its dimerization. Dimerization correlates with its ability to activate GC. As to expression, retina and pineal gland.

Stimulates synthesis of cGMP in photoreceptors. Thought to mediate Ca(2+)-sensitive regulation of retinal guanylyl cyclase (GC), a key event in recovery of the dark state of rod photoreceptors following light exposure. The chain is Guanylyl cyclase-activating protein 2 (GUCA1B) from Gallus gallus (Chicken).